A 419-amino-acid chain; its full sequence is Gamma-glutamyl phosphate reductase (419 aa).

Belongs to the gamma-glutamyl phosphate reductase family.

The protein localises to the cytoplasm. It carries out the reaction L-glutamate 5-semialdehyde + phosphate + NADP(+) = L-glutamyl 5-phosphate + NADPH + H(+). It participates in amino-acid biosynthesis; L-proline biosynthesis; L-glutamate 5-semialdehyde from L-glutamate: step 2/2. In terms of biological role, catalyzes the NADPH-dependent reduction of L-glutamate 5-phosphate into L-glutamate 5-semialdehyde and phosphate. The product spontaneously undergoes cyclization to form 1-pyrroline-5-carboxylate. The sequence is that of Gamma-glutamyl phosphate reductase from Azoarcus sp. (strain BH72).